Reading from the N-terminus, the 93-residue chain is Large ribosomal subunit protein uL23c (93 aa).

Belongs to the universal ribosomal protein uL23 family. As to quaternary structure, part of the 50S ribosomal subunit.

Its subcellular location is the plastid. The protein localises to the chloroplast. In terms of biological role, binds to 23S rRNA. The protein is Large ribosomal subunit protein uL23c (rpl23) of Fragaria ananassa (Strawberry).